We begin with the raw amino-acid sequence, 660 residues long: UvrABC system protein B (660 aa).

One can recognise a Helicase ATP-binding domain in the interval 25–183 (EGLNKGLKHQ…ALINIHYERN (159 aa)). Residue 38–45 (GVTGSGKT) coordinates ATP. The Beta-hairpin motif lies at 91–114 (YYDYYQPEAYLPTTDTYIEKDSSV). In terms of domain architecture, Helicase C-terminal spans 431 to 593 (QIDDLIGEVN…IVPQTIHKAL (163 aa)). Residues 622–657 (ADMVIELEAEMHLAAKNLEFERAAALRDNIKELRST) enclose the UVR domain.

Belongs to the UvrB family. As to quaternary structure, forms a heterotetramer with UvrA during the search for lesions. Interacts with UvrC in an incision complex.

Its subcellular location is the cytoplasm. The UvrABC repair system catalyzes the recognition and processing of DNA lesions. A damage recognition complex composed of 2 UvrA and 2 UvrB subunits scans DNA for abnormalities. Upon binding of the UvrA(2)B(2) complex to a putative damaged site, the DNA wraps around one UvrB monomer. DNA wrap is dependent on ATP binding by UvrB and probably causes local melting of the DNA helix, facilitating insertion of UvrB beta-hairpin between the DNA strands. Then UvrB probes one DNA strand for the presence of a lesion. If a lesion is found the UvrA subunits dissociate and the UvrB-DNA preincision complex is formed. This complex is subsequently bound by UvrC and the second UvrB is released. If no lesion is found, the DNA wraps around the other UvrB subunit that will check the other stand for damage. The sequence is that of UvrABC system protein B from Methanococcoides burtonii (strain DSM 6242 / NBRC 107633 / OCM 468 / ACE-M).